A 352-amino-acid chain; its full sequence is Photosystem II D2 protein (352 aa).

Thr2 is modified (N-acetylthreonine). Thr2 is modified (phosphothreonine). Residues 40–60 (TAYLALGGWLTGTTFVTSWYT) form a helical membrane-spanning segment. His117 lines the chlorophyll a pocket. The chain crosses the membrane as a helical span at residues 124 to 140 (GFMLRQFEIARSVKLRP). Pheophytin a is bound by residues Gln129 and Asn142. Residues 152-165 (VFVSVFLIYPLGQS) traverse the membrane as a helical segment. His197 provides a ligand contact to chlorophyll a. A helical membrane pass occupies residues 207–227 (AALLCAIHGATVENTLFEDGD). The a plastoquinone site is built by His214 and Phe261. Residue His214 participates in Fe cation binding. A Fe cation-binding site is contributed by His268. The chain crosses the membrane as a helical span at residues 278-294 (GLWMSALGVVGLALNLR).

This sequence belongs to the reaction center PufL/M/PsbA/D family. PSII is composed of 1 copy each of membrane proteins PsbA, PsbB, PsbC, PsbD, PsbE, PsbF, PsbH, PsbI, PsbJ, PsbK, PsbL, PsbM, PsbT, PsbX, PsbY, PsbZ, Psb30/Ycf12, at least 3 peripheral proteins of the oxygen-evolving complex and a large number of cofactors. It forms dimeric complexes. Requires The D1/D2 heterodimer binds P680, chlorophylls that are the primary electron donor of PSII, and subsequent electron acceptors. It shares a non-heme iron and each subunit binds pheophytin, quinone, additional chlorophylls, carotenoids and lipids. There is also a Cl(-1) ion associated with D1 and D2, which is required for oxygen evolution. The PSII complex binds additional chlorophylls, carotenoids and specific lipids. as cofactor.

It is found in the plastid. Its subcellular location is the chloroplast thylakoid membrane. It carries out the reaction 2 a plastoquinone + 4 hnu + 2 H2O = 2 a plastoquinol + O2. Photosystem II (PSII) is a light-driven water:plastoquinone oxidoreductase that uses light energy to abstract electrons from H(2)O, generating O(2) and a proton gradient subsequently used for ATP formation. It consists of a core antenna complex that captures photons, and an electron transfer chain that converts photonic excitation into a charge separation. The D1/D2 (PsbA/PsbD) reaction center heterodimer binds P680, the primary electron donor of PSII as well as several subsequent electron acceptors. D2 is needed for assembly of a stable PSII complex. This Pleurastrum terricola (Filamentous green alga) protein is Photosystem II D2 protein.